The following is a 291-amino-acid chain: ADP-dependent (S)-NAD(P)H-hydrate dehydratase (291 aa).

The region spanning serine 5–tyrosine 273 is the YjeF C-terminal domain. (6S)-NADPHX is bound by residues alanine 40, glycine 103, and histidine 153. Position 215 (glycine 215) interacts with AMP. Aspartate 216 is a (6S)-NADPHX binding site.

The protein belongs to the NnrD/CARKD family. In terms of assembly, homotetramer. It depends on Mg(2+) as a cofactor.

The enzyme catalyses (6S)-NADHX + ADP = AMP + phosphate + NADH + H(+). The catalysed reaction is (6S)-NADPHX + ADP = AMP + phosphate + NADPH + H(+). Catalyzes the dehydration of the S-form of NAD(P)HX at the expense of ADP, which is converted to AMP. Together with NAD(P)HX epimerase, which catalyzes the epimerization of the S- and R-forms, the enzyme allows the repair of both epimers of NAD(P)HX, a damaged form of NAD(P)H that is a result of enzymatic or heat-dependent hydration. The sequence is that of ADP-dependent (S)-NAD(P)H-hydrate dehydratase from Enterococcus faecalis (strain ATCC 700802 / V583).